The primary structure comprises 401 residues: Methionyl-tRNA formyltransferase, mitochondrial (401 aa).

Residues 1-26 constitute a mitochondrion transit peptide; it reads MVKMRRITPTRLLFTCRYISNNASPP. (6R)-10-formyltetrahydrofolate contacts are provided by residues 18 to 20 and 66 to 70; these read YIS and VVTRS.

The protein belongs to the Fmt family. Post-translationally, phosphorylated by GCN2 in response to nutrient deprivation. Phosphorylation mediates retention of FMT1 in the cytoplasm.

It is found in the mitochondrion. It localises to the mitochondrion matrix. The protein localises to the cytoplasm. The enzyme catalyses L-methionyl-tRNA(fMet) + (6R)-10-formyltetrahydrofolate = N-formyl-L-methionyl-tRNA(fMet) + (6S)-5,6,7,8-tetrahydrofolate + H(+). In terms of biological role, formylates methionyl-tRNA in mitochondria and the cytoplasm. Responsible for the formylation of the 8 N-terminally formylated (Nt-formylated) mitochondrial matrix proteins that are encoded by mitochondrial DNA. Nt-formylated proteins in the cytoplasm are strongly up-regulated in stationary phase or upon starvation for specific amino acids (His or Lys) and are targeted for degradation by a PSH1 E3 ubiquitin ligase-mediated fMet/N-end rule pathway. Increased Nt-formylation of cytosolic proteins appears to be important for adaptation to these stresses. Stationary phase-degraded Nt-formylated proteins include histone H3-like centromeric protein CSE4, Mediator complex subunit 3 (PGD1) and small ribosomal subunit protein uS8-A (RPS22A). The sequence is that of Methionyl-tRNA formyltransferase, mitochondrial (FMT1) from Saccharomyces cerevisiae (strain ATCC 204508 / S288c) (Baker's yeast).